The primary structure comprises 55 residues: MAKGARDKIKLESTAGTGHFYTTTKNKRNMPEKMAIKKFDPVVRKHVEYKETKIK.

The protein belongs to the bacterial ribosomal protein bL33 family.

This chain is Large ribosomal subunit protein bL33, found in Burkholderia ambifaria (strain MC40-6).